The chain runs to 73 residues: Conotoxin Bt11.1 (73 aa).

The first 20 residues, 1-20, serve as a signal peptide directing secretion; sequence MKLCVAFLLVLVILPSVIGG. A propeptide spanning residues 21–35 is cleaved from the precursor; it reads KPSERTLSGATRRGD. Disulfide bonds link Cys-39/Cys-53, Cys-46/Cys-58, Cys-52/Cys-63, and Cys-57/Cys-70.

Belongs to the conotoxin I1 superfamily. As to expression, expressed by the venom duct.

It is found in the secreted. This chain is Conotoxin Bt11.1, found in Conus betulinus (Beech cone).